Here is an 874-residue protein sequence, read N- to C-terminus: uncharacterized protein (874 aa).

This is an uncharacterized protein from Ostreid herpesvirus 1 (isolate France) (OsHV-1).